The primary structure comprises 324 residues: MFTTAFAQREQTQPGGLPLDLFAAIDSLKKELNAVILAHYYQEPDIQDIADFIGDSLQLARAAAKTNADVIVFAGVHFMAETAKILNPEKLVLLPDLNAGCSLADSCPPKEFAAFKAAHPDHLVVSYINCSAEIKAMSDIICTSSNAVKIVQQIPKEQPIIFAPDRNLGRYVMEQTGRDLVLWQGSCLVHETFSEKKIVQLKVAHPQAEAIAHPECESSVLRHASFIGSTAALLQYCQTSPSQEFIVATEPGIIHQMQKLAPNKHFIPAPPINNCACNECPFMRLNTLEKLYWAMKNRTPEITMSEDIRIAALRPMQRMLEMSN.

Iminosuccinate contacts are provided by histidine 39 and serine 56. Cysteine 101 provides a ligand contact to [4Fe-4S] cluster. Iminosuccinate-binding positions include 127-129 (YIN) and serine 144. A [4Fe-4S] cluster-binding site is contributed by cysteine 187. Iminosuccinate contacts are provided by residues 213-215 (HPE) and threonine 230. Cysteine 280 serves as a coordination point for [4Fe-4S] cluster.

It belongs to the quinolinate synthase family. Type 2 subfamily. Requires [4Fe-4S] cluster as cofactor.

It is found in the cytoplasm. The enzyme catalyses iminosuccinate + dihydroxyacetone phosphate = quinolinate + phosphate + 2 H2O + H(+). It participates in cofactor biosynthesis; NAD(+) biosynthesis; quinolinate from iminoaspartate: step 1/1. Functionally, catalyzes the condensation of iminoaspartate with dihydroxyacetone phosphate to form quinolinate. This Trichormus variabilis (strain ATCC 29413 / PCC 7937) (Anabaena variabilis) protein is Quinolinate synthase.